A 248-amino-acid polypeptide reads, in one-letter code: Something about silencing protein 5 (248 aa).

The region spanning 1-139 is the YEATS domain; it reads MDHSIEVTFR…SELSKYFDLP (139 aa). Phosphoserine is present on Ser-144. Residues 223 to 248 form a disordered region; it reads TKQERTNFGSDAIHKDEPVKAHNKLK.

In terms of assembly, component of the SAS complex, at least composed of SAS2, SAS4 and SAS5. These three proteins constitute the core of the complex, and are sufficient to acetylate histones.

The protein resides in the nucleus. Its function is as follows. Component of the SAS complex, a multiprotein complex that acetylates 'Lys-16' of histone H4 and 'Lys-14' of histone H3. The SAS complex is however unable to acetylate nucleosomal histones. The complex is involved in transcriptional silencing at telomeres and at HML locus. Also involved in rDNA silencing. In the complex, SAS5 is required for maximal histone acetyltransferase (HAT) activity of the complex, suggesting that it may be required to stabilize the complex or help in substrate recognition. The protein is Something about silencing protein 5 (SAS5) of Saccharomyces cerevisiae (strain ATCC 204508 / S288c) (Baker's yeast).